Reading from the N-terminus, the 418-residue chain is UDP-N-acetylglucosamine 1-carboxyvinyltransferase (418 aa).

Residue 22–23 (KN) participates in phosphoenolpyruvate binding. R92 provides a ligand contact to UDP-N-acetyl-alpha-D-glucosamine. Catalysis depends on C116, which acts as the Proton donor. C116 carries the 2-(S-cysteinyl)pyruvic acid O-phosphothioketal modification. D306 and I328 together coordinate UDP-N-acetyl-alpha-D-glucosamine.

The protein belongs to the EPSP synthase family. MurA subfamily.

The protein resides in the cytoplasm. It catalyses the reaction phosphoenolpyruvate + UDP-N-acetyl-alpha-D-glucosamine = UDP-N-acetyl-3-O-(1-carboxyvinyl)-alpha-D-glucosamine + phosphate. It participates in cell wall biogenesis; peptidoglycan biosynthesis. In terms of biological role, cell wall formation. Adds enolpyruvyl to UDP-N-acetylglucosamine. The chain is UDP-N-acetylglucosamine 1-carboxyvinyltransferase from Solibacter usitatus (strain Ellin6076).